A 442-amino-acid chain; its full sequence is tRNA-2-methylthio-N(6)-dimethylallyladenosine synthase (442 aa).

One can recognise an MTTase N-terminal domain in the interval 6-122 (RKFYIHTFGC…LPVLIAEAGK (117 aa)). [4Fe-4S] cluster-binding residues include Cys-15, Cys-51, Cys-85, Cys-157, Cys-161, and Cys-164. In terms of domain architecture, Radical SAM core spans 143 to 373 (RTQSLTAFVP…IDLQNGISAE (231 aa)). The region spanning 376–439 (RLAIGSVVEV…SATLIGRAAE (64 aa)) is the TRAM domain.

It belongs to the methylthiotransferase family. MiaB subfamily. In terms of assembly, monomer. The cofactor is [4Fe-4S] cluster.

It localises to the cytoplasm. The catalysed reaction is N(6)-dimethylallyladenosine(37) in tRNA + (sulfur carrier)-SH + AH2 + 2 S-adenosyl-L-methionine = 2-methylsulfanyl-N(6)-dimethylallyladenosine(37) in tRNA + (sulfur carrier)-H + 5'-deoxyadenosine + L-methionine + A + S-adenosyl-L-homocysteine + 2 H(+). In terms of biological role, catalyzes the methylthiolation of N6-(dimethylallyl)adenosine (i(6)A), leading to the formation of 2-methylthio-N6-(dimethylallyl)adenosine (ms(2)i(6)A) at position 37 in tRNAs that read codons beginning with uridine. The polypeptide is tRNA-2-methylthio-N(6)-dimethylallyladenosine synthase (Chlorobium limicola (strain DSM 245 / NBRC 103803 / 6330)).